Reading from the N-terminus, the 231-residue chain is Small ribosomal subunit protein uS5 (231 aa).

One can recognise an S5 DRBM domain in the interval 61 to 124; that stretch reads KFRSKKPYRM…NRAKLNIIKV (64 aa).

The protein belongs to the universal ribosomal protein uS5 family. Part of the 30S ribosomal subunit. Contacts protein S4.

Its function is as follows. With S4 and S12 plays an important role in translational accuracy. This is Small ribosomal subunit protein uS5 from Nanoarchaeum equitans (strain Kin4-M).